The sequence spans 683 residues: DNA ligase (683 aa).

NAD(+)-binding positions include 44-48, 93-94, and glutamate 127; these read DAEYD and SL. Lysine 129 serves as the catalytic N6-AMP-lysine intermediate. 4 residues coordinate NAD(+): arginine 150, glutamate 187, lysine 302, and lysine 326. Zn(2+)-binding residues include cysteine 420, cysteine 423, cysteine 438, and cysteine 444. One can recognise a BRCT domain in the interval 601-683; the sequence is RVGGRLAGLT…SKLLATGGNQ (83 aa).

Belongs to the NAD-dependent DNA ligase family. LigA subfamily. It depends on Mg(2+) as a cofactor. Requires Mn(2+) as cofactor.

The enzyme catalyses NAD(+) + (deoxyribonucleotide)n-3'-hydroxyl + 5'-phospho-(deoxyribonucleotide)m = (deoxyribonucleotide)n+m + AMP + beta-nicotinamide D-nucleotide.. Its function is as follows. DNA ligase that catalyzes the formation of phosphodiester linkages between 5'-phosphoryl and 3'-hydroxyl groups in double-stranded DNA using NAD as a coenzyme and as the energy source for the reaction. It is essential for DNA replication and repair of damaged DNA. The sequence is that of DNA ligase from Trichlorobacter lovleyi (strain ATCC BAA-1151 / DSM 17278 / SZ) (Geobacter lovleyi).